Consider the following 392-residue polypeptide: tRNA (guanine(26)-N(2)/guanine(27)-N(2))-dimethyltransferase (392 aa).

The region spanning 2–375 (EIVQEGIAKI…LSFEEVMKKM (374 aa)) is the Trm1 methyltransferase domain. Residues Arg36, Arg66, Asp84, Glu113, and Ala114 each contribute to the S-adenosyl-L-methionine site. Zn(2+)-binding residues include Cys247, Cys250, Cys266, and Cys269.

It belongs to the class I-like SAM-binding methyltransferase superfamily. Trm1 family.

It carries out the reaction guanosine(26)/guanosine(27) in tRNA + 4 S-adenosyl-L-methionine = N(2)-dimethylguanosine(26)/N(2)-dimethylguanosine(27) in tRNA + 4 S-adenosyl-L-homocysteine + 4 H(+). Functionally, dimethylates the guanine residues at position 26 and 27 of one or more tRNAs using S-adenosyl-L-methionine as donor of the methyl groups. This chain is tRNA (guanine(26)-N(2)/guanine(27)-N(2))-dimethyltransferase, found in Aquifex aeolicus (strain VF5).